The following is a 274-amino-acid chain: UPF0758 protein RHECIAT_CH0001935 (274 aa).

The segment at 1-57 is disordered; that stretch reads MAKRPAATSSNDELPFATEEPVADERSFFGGRPQNPTAPNARAALPASLSGPEHYHG. Residues 152–274 form the MPN domain; sequence VLSSWSSVIQ…HVSLKGLKLI (123 aa). Zn(2+) contacts are provided by His-223, His-225, and Asp-236. The JAMM motif signature appears at 223 to 236; sequence HNHPSGDPTPSRAD.

It belongs to the UPF0758 family.

The sequence is that of UPF0758 protein RHECIAT_CH0001935 from Rhizobium etli (strain CIAT 652).